We begin with the raw amino-acid sequence, 848 residues long: MTATVENLTFQKDTLGNAVDKNTSRLELRSYSLAGRHGSTEPLVLAWSSQFRRLTWGCALDALHRSPCVAASQHGVTHLIRSSRTPHSTRCRKEDAQPGHHGNGAASVTAQARGQRSVLQVPLPVPRSCLFSESFVVSVSSQSRFLASVPGTGVQRSTAADMAASTAAGKQRIPKVAKVKNKAPAEVQITAEQLLREAKERELELLPPPPQQKITDEEELNDYKLRKRKTFEDNIRKNRTVISNWIKYAQWEESLKEIQRARSIYERALDVDYRNITLWLKYAEMEMKNRQVNHARNIWDRAITTLPRVNQFWYKYTYMEEMLGNVAGARQVFERWMEWQPEEQAWHSYINFELRYKEVDRARTIYERFVLVHPDVKNWIKYARFEEKHAYFAHARKVYERAVEFFGDEHMDEHLYVAFAKFEENQKEFERVRVIYKYALDRISKQDAQELFKNYTIFEKKFGDRRGIEDIIVSKRRFQYEEEVKANPHNYDAWFDYLRLVESDAEAEAVREVYERAIANVPPIQEKRHWKRYIYLWINYALYEELEAKDPERTRQVYQASLELIPHKKFTFAKMWILYAQFEIRQKNLSLARRALGTSIGKCPKNKLFKVYIELELQLREFDRCRKLYEKFLEFGPENCTSWIKFAELETILGDIDRARAIYELAISQPRLDMPEVLWKSYIDFEIEQEETERTRNLYRRLLQRTQHVKVWISFAQFELSSGKEGSLTKCRQIYEEANKTMRNCEEKEERLMLLESWRSFEEEFGTASDKERVDKLMPEKVKKRRKVQTDDGSDAGWEEYFDYIFPEDAANQPNLKLLAMAKLWKKQQQEKEDAEHHPDEDVDESES.

N-acetylalanine is present on Thr2. Residues 81–106 (RSSRTPHSTRCRKEDAQPGHHGNGAA) are disordered. 17 HAT repeats span residues 222–254 (DYKL…WEES), 256–288 (KEIQ…MEMK), 290–322 (RQVN…MEEM), 324–355 (GNVA…FELR), 357–388 (KEVD…FEEK), 390–425 (AYFA…FEEN), 427–461 (KEFE…FEKK), 471–503 (IIVS…LVES), 505–539 (AEAE…LWIN), 549–585 (KDPE…FEIR), 587–618 (KNLS…LELQ), 620–652 (REFD…LETI), 654–688 (GDID…FEIE), 690–721 (EETE…FELS), 726–767 (GSLT…EFGT), 769–807 (SDKE…YIFP), and 809–834 (DAAN…EKED). A mediates interaction with HSP90 region spans residues 411 to 628 (MDEHLYVAFA…LREFDRCRKL (218 aa)). Ser503 carries the phosphoserine modification. The disordered stretch occupies residues 827 to 848 (KQQQEKEDAEHHPDEDVDESES). Positions 828 to 840 (QQQEKEDAEHHPD) are enriched in basic and acidic residues.

It belongs to the crooked-neck family. In terms of assembly, identified in the spliceosome C complex. Present in a spliceosome complex assembled in vitro containing CRNKL1, HPRP8BP and SNRPB2. Component of the minor spliceosome, which splices U12-type introns. Isoform 2 seems to be predominant in the spliceosome complex. Interacts with PPIL2 (via the PPIase cyclophilin-type domain); they may form a trimeric complex with HSP90. In terms of tissue distribution, widely expressed. Highly expressed in testis. Not detected in brain and lung.

It is found in the nucleus. Its subcellular location is the nucleus speckle. Functionally, involved in pre-mRNA splicing process. As a component of the minor spliceosome, involved in the splicing of U12-type introns in pre-mRNAs. The sequence is that of Crooked neck-like protein 1 (CRNKL1) from Homo sapiens (Human).